Reading from the N-terminus, the 116-residue chain is Ribonuclease T (116 aa).

The Exonuclease domain occupies 18 to 99 (KRAILVGHNS…YDTEKTAELF (82 aa)). The Proton donor/acceptor role is filled by His86.

Belongs to the RNase T family. As to quaternary structure, homodimer.

Functionally, trims short 3' overhangs of a variety of RNA species, leaving a one or two nucleotide 3' overhang. Responsible for the end-turnover of tRNA: specifically removes the terminal AMP residue from uncharged tRNA (tRNA-C-C-A). Also appears to be involved in tRNA biosynthesis. This is Ribonuclease T from Azotobacter vinelandii.